Here is a 909-residue protein sequence, read N- to C-terminus: DNA mismatch repair protein MutS (909 aa).

Gly-614–Ser-621 provides a ligand contact to ATP. Residues Leu-798 to Ile-827 form a disordered region. Residues Ser-818–Ile-827 show a composition bias toward basic and acidic residues.

This sequence belongs to the DNA mismatch repair MutS family.

In terms of biological role, this protein is involved in the repair of mismatches in DNA. It is possible that it carries out the mismatch recognition step. This protein has a weak ATPase activity. The protein is DNA mismatch repair protein MutS of Clostridium novyi (strain NT).